Reading from the N-terminus, the 160-residue chain is Dysbindin domain-containing protein 1 (160 aa).

3 positions are modified to phosphoserine: Ser3, Ser97, and Ser121. The interval Ala95–Asp160 is disordered. Over residues Thr127–Arg143 the composition is skewed to basic and acidic residues.

This sequence belongs to the dysbindin family.

This is Dysbindin domain-containing protein 1 (Dbndd1) from Mus musculus (Mouse).